The primary structure comprises 279 residues: Membrane protein insertase YidC (279 aa).

An N-terminal signal peptide occupies residues Met-1 to Ala-22. Cys-23 carries N-palmitoyl cysteine lipidation. A lipid anchor (S-diacylglycerol cysteine) is attached at Cys-23. Helical transmembrane passes span Ile-35–Phe-55, Tyr-59–Ile-79, Met-129–Val-149, Pro-170–Met-190, and Pro-210–Val-230. Basic and acidic residues predominate over residues Glu-253 to Lys-268. Residues Glu-253–Lys-279 are disordered. The span at Ala-269 to Lys-279 shows a compositional bias: basic residues.

This sequence belongs to the OXA1/ALB3/YidC family. Type 2 subfamily.

Its subcellular location is the cell membrane. In terms of biological role, required for the insertion and/or proper folding and/or complex formation of integral membrane proteins into the membrane. Involved in integration of membrane proteins that insert both dependently and independently of the Sec translocase complex, as well as at least some lipoproteins. This Pediococcus pentosaceus (strain ATCC 25745 / CCUG 21536 / LMG 10740 / 183-1w) protein is Membrane protein insertase YidC.